A 103-amino-acid chain; its full sequence is Large ribosomal subunit protein uL24 (103 aa).

This sequence belongs to the universal ribosomal protein uL24 family. Part of the 50S ribosomal subunit.

In terms of biological role, one of two assembly initiator proteins, it binds directly to the 5'-end of the 23S rRNA, where it nucleates assembly of the 50S subunit. Functionally, one of the proteins that surrounds the polypeptide exit tunnel on the outside of the subunit. In Brucella ovis (strain ATCC 25840 / 63/290 / NCTC 10512), this protein is Large ribosomal subunit protein uL24.